We begin with the raw amino-acid sequence, 192 residues long: UPF0301 protein Bcen_0382 (192 aa).

The protein belongs to the UPF0301 (AlgH) family.

This is UPF0301 protein Bcen_0382 from Burkholderia orbicola (strain AU 1054).